Here is a 244-residue protein sequence, read N- to C-terminus: Carbonyl reductase [NADPH] 2 (244 aa).

Residue 11 to 39 (LVTGAGKGIGRDTVKALHVSGARVVAVTR) coordinates NADP(+). S136 contacts substrate. Catalysis depends on Y149, which acts as the Proton acceptor. Position 176 is a phosphoserine (S176).

This sequence belongs to the short-chain dehydrogenases/reductases (SDR) family. As to quaternary structure, homotetramer. In terms of tissue distribution, lung (ciliated cells, non-ciliated bronchiolar cells and type-II alveolar pneumocytes). Low expression in all extrapulmonary tissues, including adipose tissue.

Its subcellular location is the mitochondrion matrix. It carries out the reaction a secondary alcohol + NADP(+) = a ketone + NADPH + H(+). Allosteric enzyme exhibiting negative cooperativity. Activated 2-5 fold by fatty acids. Its function is as follows. May function in the pulmonary metabolism of endogenous carbonyl compounds, such as aliphatic aldehydes and ketones derived from lipid peroxidation, 3-ketosteroids and fatty aldehydes, as well as in xenobiotic metabolism. The polypeptide is Carbonyl reductase [NADPH] 2 (CBR2) (Sus scrofa (Pig)).